The primary structure comprises 110 residues: Putative membrane protein insertion efficiency factor (110 aa).

The protein belongs to the UPF0161 family.

Its subcellular location is the cell inner membrane. Could be involved in insertion of integral membrane proteins into the membrane. The protein is Putative membrane protein insertion efficiency factor of Aliarcobacter butzleri (strain RM4018) (Arcobacter butzleri).